The sequence spans 262 residues: uncharacterized protein (262 aa).

An S4 RNA-binding domain is found at 6–70 (LRINQFLAHY…LKNKKFSVLV (65 aa)). The active-site Nucleophile is D108.

It belongs to the pseudouridine synthase RsuA family.

It carries out the reaction a uridine in RNA = a pseudouridine in RNA. This is an uncharacterized protein from Helicobacter pylori (strain ATCC 700392 / 26695) (Campylobacter pylori).